We begin with the raw amino-acid sequence, 76 residues long: DNA-directed RNA polymerase subunit epsilon (76 aa).

It belongs to the RNA polymerase subunit epsilon family. As to quaternary structure, RNAP is composed of a core of 2 alpha, a beta and a beta' subunit. The core is associated with a delta subunit, and at least one of epsilon or omega. When a sigma factor is associated with the core the holoenzyme is formed, which can initiate transcription.

The catalysed reaction is RNA(n) + a ribonucleoside 5'-triphosphate = RNA(n+1) + diphosphate. Its function is as follows. A non-essential component of RNA polymerase (RNAP). In Streptococcus mutans serotype c (strain ATCC 700610 / UA159), this protein is DNA-directed RNA polymerase subunit epsilon.